Reading from the N-terminus, the 217-residue chain is Claudin-9 (217 aa).

Over 1-12 (MASTGLELLGMT) the chain is Cytoplasmic. Residues 13–33 (LAVLGWLGTLVSCALPLWKVT) form a helical membrane-spanning segment. Residues 34–81 (AFIGNSIVVAQVVWEGLWMSCVVQSTGQMQCKVYDSLLALPQDLQAAR) are Extracellular-facing. The helical transmembrane segment at 82–102 (ALCVVALLLALLGLLVAITGA) threads the bilayer. Residues 103–116 (QCTTCVEDEGAKAR) are Cytoplasmic-facing. The helical transmembrane segment at 117–137 (IVLTAGVLLLLSGILVLIPVC) threads the bilayer. The Extracellular portion of the chain corresponds to 138–159 (WTAHAIIQDFYNPLVAEALKRE). A helical transmembrane segment spans residues 160 to 180 (LGASLYLGWAAAALLMLGGGL). At 181–217 (LCCTCPPSHFERPRGPRLGYSIPSRSGASGLDKRDYV) the chain is on the cytoplasmic side.

It belongs to the claudin family. As to quaternary structure, interacts with CLDN1, CD81 and OCLN.

It localises to the cell junction. The protein localises to the tight junction. The protein resides in the cell membrane. Functionally, plays a major role in tight junction-specific obliteration of the intercellular space, through calcium-independent cell-adhesion activity. The sequence is that of Claudin-9 (Cldn9) from Mus musculus (Mouse).